The primary structure comprises 282 residues: Putative phosphite transport system permease protein HtxC (282 aa).

4 helical membrane-spanning segments follow: residues 23–43 (HFAT…VCQI), 81–101 (LAMA…LALM), 130–150 (VYAL…VLAI), and 239–259 (FNKM…IDFI). The region spanning 77–260 (AGETLAMATI…LMVSAIDFIS (184 aa)) is the ABC transmembrane type-1 domain.

The protein belongs to the binding-protein-dependent transport system permease family.

It is found in the cell inner membrane. Probably forms part of a binding-protein-dependent hypophosphite transporter. The protein is Putative phosphite transport system permease protein HtxC (htxC) of Stutzerimonas stutzeri (Pseudomonas stutzeri).